The chain runs to 217 residues: IMPACT family member YvyE (217 aa).

This sequence belongs to the IMPACT family.

This Bacillus subtilis (strain 168) protein is IMPACT family member YvyE (yvyE).